A 484-amino-acid polypeptide reads, in one-letter code: Oxysterol-binding protein-related protein 2 (484 aa).

Phosphoserine occurs at positions 19 and 20. Residues 35–61 (DLDTSKSTRSGKNGEKPQQENGIQKHR) are disordered. Residues lysine 90 and 178–179 (HH) each bind a 1,2-diacyl-sn-glycero-3-phospho-(1D-myo-inositol-4,5-bisphosphate). 2 stretches are compositionally biased toward basic and acidic residues: residues 319–340 (KQEK…EKAN) and 424–450 (SQEK…EWRT). Disordered stretches follow at residues 319–348 (KQEK…GDVA) and 423–454 (ASQE…RWFS). 431–435 (EEKQR) lines the a 1,2-diacyl-sn-glycero-3-phospho-(1D-myo-inositol-4,5-bisphosphate) pocket.

The protein belongs to the OSBP family. As to quaternary structure, monomer. Homotetramer; phosphatidylinositol-4,5-bisphosphate binding promotes formation of stable tetramers. Interacts with DIAPH1. In terms of tissue distribution, detected in cochlea, in inner and outer hair cells in the organ of Corti (at protein level).

Its subcellular location is the cytoplasm. The protein localises to the cytosol. The protein resides in the lipid droplet. It localises to the cell membrane. Its function is as follows. Intracellular transport protein that binds sterols and phospholipids and mediates lipid transport between intracellular compartments. Increases plasma membrane cholesterol levels and decreases phosphatidylinositol-4,5-bisphosphate levels in the cell membrane. Binds phosphoinositides, such as phosphatidylinositol-4,5-bisphosphate. Exhibits strong binding to phosphatidic acid and weak binding to phosphatidylinositol 3-phosphate. Binds cholesterol, dehydroergosterol, 22(R)-hydroxycholesterol and 25-hydroxycholesterol (in vitro). This Mus musculus (Mouse) protein is Oxysterol-binding protein-related protein 2 (Osbpl2).